Consider the following 88-residue polypeptide: Toxin RelE2 (88 aa).

This sequence belongs to the RelE toxin family.

Its function is as follows. Toxic component of a type II toxin-antitoxin (TA) system. Its toxic effect is neutralized by coexpression with cognate antitoxin RelB2 but no other ParD or RelB antitoxin. This Caulobacter vibrioides (strain ATCC 19089 / CIP 103742 / CB 15) (Caulobacter crescentus) protein is Toxin RelE2 (relE2).